A 222-amino-acid polypeptide reads, in one-letter code: uncharacterized protein (222 aa).

This sequence belongs to the ycf73 family.

The protein resides in the plastid. Its subcellular location is the chloroplast. This is an uncharacterized protein from Oryza nivara (Indian wild rice).